Reading from the N-terminus, the 443-residue chain is dTDP-4-dehydro-6-deoxy-alpha-D-glucopyranose 2,3-dehydratase (443 aa).

DTDP-4-dehydro-6-deoxy-alpha-D-glucose-binding positions include Trp-35, 118–122 (TFSNY), Ser-157, Trp-260, Arg-325, 341–343 (QCN), 346–347 (NL), and 377–380 (EGGR).

It belongs to the hexose 2,3-dehydratase family. Homodimer.

It catalyses the reaction dTDP-4-dehydro-6-deoxy-alpha-D-glucose = dTDP-3,4-didehydro-2,6-dideoxy-alpha-D-glucose + H2O. Its pathway is antibiotic biosynthesis; granaticin biosynthesis. In terms of biological role, involved in the biosynthesis of the 2,6-deoxysugar, dTDP-L-rhodinose, attached to the benzoisochromane quinone chromophore to produce the aglycone antibiotics granaticin and granaticin B. Catalyzes the removal of the hydroxyl group at position C-2 of the hexose ring of dTDP-4-dehydro-6-deoxy-alpha-D-glucopyranose, and the oxidation of the hydroxyl group at position C-3 to form a carbonyl functionality. The product of the reaction, dTDP-2,6-dideoxy-D-glycero-hex-2-enos-4-ulose, is a highly unstable diketosugar, which spontaneously forms dTDP-3,4-didehydro-2,6-dideoxy-alpha-D-glucose. The protein is dTDP-4-dehydro-6-deoxy-alpha-D-glucopyranose 2,3-dehydratase of Streptomyces violaceoruber.